We begin with the raw amino-acid sequence, 425 residues long: Lysosome-associated membrane glycoprotein 2 (425 aa).

Positions 1 to 27 are cleaved as a signal peptide; sequence MAPPRCPAGLALLLLLLGACGFFQSYA. Residues 28–192 are first lumenal domain; it reads VEVDVKDASN…SKKESRCYAD (165 aa). Residues 28–389 are Lumenal-facing; it reads VEVDVKDASN…EECFADSDLN (362 aa). N-linked (GlcNAc...) asparagine glycans are attached at residues Asn37, Asn56, Asn62, Asn74, Asn100, Asn105, Asn120, Asn163, Asn170, Asn179, Asn206, Asn232, Asn239, Asn252, Asn276, Asn287, Asn298, Asn312, Asn320, and Asn331. The cysteines at positions 40 and 78 are disulfide-linked. Cysteines 153 and 189 form a disulfide. Positions 193 to 238 are hinge; the sequence is TPTAAPTVLPTVANVTTASTTISPAPTTAPKPAENPVTGNYSLKTG. Residues 239–390 form a second lumenal domain region; the sequence is NKTCLLATVG…ECFADSDLNF (152 aa). Cys242 and Cys274 are oxidised to a cystine. A disulfide bridge connects residues Cys345 and Cys382. A helical transmembrane segment spans residues 390–414; sequence FLIPVAVGMALGFLIILVFISYIIG. Residues 415-425 lie on the Cytoplasmic side of the membrane; sequence RRKSRTGYQSV. An important for binding and subsequent lysosomal degradation of target proteins region spans residues 416 to 419; it reads RKSR.

It belongs to the LAMP family. In terms of assembly, monomer. Forms large homooligomers. Extensively N-glycosylated. Contains a minor proportion of O-linked glycans.

The protein localises to the lysosome membrane. Its subcellular location is the endosome membrane. It localises to the cell membrane. It is found in the cytoplasmic vesicle. The protein resides in the autophagosome membrane. Its function is as follows. Lysosomal membrane glycoprotein which plays an important role in lysosome biogenesis, lysosomal pH regulation and autophagy. Plays an important role in chaperone-mediated autophagy, a process that mediates lysosomal degradation of proteins in response to various stresses and as part of the normal turnover of proteins with a long biological half-live. In the chaperone-mediated autophagy, acts downstream of chaperones, such as HSPA8/HSC70, which recognize and bind substrate proteins and mediate their recruitment to lysosomes, where target proteins bind LAMP2. Plays a role in lysosomal protein degradation in response to starvation. Required for the fusion of autophagosomes with lysosomes during autophagy. In Gallus gallus (Chicken), this protein is Lysosome-associated membrane glycoprotein 2 (LAMP2).